Here is a 256-residue protein sequence, read N- to C-terminus: Type III pantothenate kinase 1 (256 aa).

6 to 13 (DIGNSHIF) contacts ATP. A substrate-binding site is contributed by 107–110 (GADR). Residue Asp109 is the Proton acceptor of the active site. Asp130 is a K(+) binding site. Thr133 lines the ATP pocket. Thr185 contacts substrate.

Belongs to the type III pantothenate kinase family. In terms of assembly, homodimer. NH4(+) serves as cofactor. The cofactor is K(+).

Its subcellular location is the cytoplasm. It carries out the reaction (R)-pantothenate + ATP = (R)-4'-phosphopantothenate + ADP + H(+). Its pathway is cofactor biosynthesis; coenzyme A biosynthesis; CoA from (R)-pantothenate: step 1/5. In terms of biological role, catalyzes the phosphorylation of pantothenate (Pan), the first step in CoA biosynthesis. This is Type III pantothenate kinase 1 from Francisella tularensis subsp. holarctica (strain LVS).